The chain runs to 402 residues: Nicotinate phosphoribosyltransferase (402 aa).

Phosphohistidine; by autocatalysis is present on His224.

The protein belongs to the NAPRTase family. Transiently phosphorylated on a His residue during the reaction cycle. Phosphorylation strongly increases the affinity for substrates and increases the rate of nicotinate D-ribonucleotide production. Dephosphorylation regenerates the low-affinity form of the enzyme, leading to product release.

It catalyses the reaction nicotinate + 5-phospho-alpha-D-ribose 1-diphosphate + ATP + H2O = nicotinate beta-D-ribonucleotide + ADP + phosphate + diphosphate. It participates in cofactor biosynthesis; NAD(+) biosynthesis; nicotinate D-ribonucleotide from nicotinate: step 1/1. Its function is as follows. Catalyzes the synthesis of beta-nicotinate D-ribonucleotide from nicotinate and 5-phospho-D-ribose 1-phosphate at the expense of ATP. The sequence is that of Nicotinate phosphoribosyltransferase from Neisseria meningitidis serogroup C (strain 053442).